The following is a 607-amino-acid chain: Matrix metalloproteinase-16 (607 aa).

Residues 1 to 31 (MILLAFSSGRRLDFVHRSGVFFLQTLLWILC) form the signal peptide. Positions 32-119 (ATVCGTEQYF…SSKFNIRRKR (88 aa)) are excised as a propeptide. The N-linked (GlcNAc...) asparagine glycan is linked to Asn-83. The Cysteine switch signature appears at 99-106 (PRCGVPDQ). Cys-101 serves as a coordination point for Zn(2+). Residues 120-564 (YALTGQKWQH…LDNTASTVKA (445 aa)) are Extracellular-facing. Position 183 (Asp-183) interacts with Ca(2+). Residues His-193 and Asp-195 each coordinate Zn(2+). Ca(2+) is bound by residues Asp-200, Gly-201, Gly-203, and Phe-205. His-208 is a binding site for Zn(2+). Ca(2+) contacts are provided by Gly-215, Gly-217, and Asp-219. His-221 contributes to the Zn(2+) binding site. Positions 223 and 226 each coordinate Ca(2+). Position 246 (His-246) interacts with Zn(2+). Glu-247 is an active-site residue. Residues His-250 and His-256 each coordinate Zn(2+). The segment at 281-340 (DDLQGIQKIYGPPDKIPPPTRPLPTVPPHRSVPPADPRRHDRPKPPRPPTGRPSYPGAKP) is disordered. The span at 294-315 (DKIPPPTRPLPTVPPHRSVPPA) shows a compositional bias: pro residues. 4 Hemopexin repeats span residues 340–388 (PNIC…WRGL), 389–434 (PPSI…GNGI), 436–484 (PHGI…KGIP), and 485–532 (ESPQ…FMGC). A disulfide bridge connects residues Cys-343 and Cys-532. The chain crosses the membrane as a helical span at residues 565-585 (IAIVIPCILALCLLVLVYTVF). Residues 586-607 (QFKRKGTPRHILYCKRSMQEWV) are Cytoplasmic-facing.

The protein belongs to the peptidase M10A family. As to quaternary structure, interacts with CSPG4 through CSPG4 chondroitin sulfate glycosaminoglycan. Zn(2+) is required as a cofactor. It depends on Ca(2+) as a cofactor. Post-translationally, the precursor is cleaved by a furin endopeptidase.

It is found in the cell membrane. Its function is as follows. Endopeptidase that degrades various components of the extracellular matrix, such as collagen type III and fibronectin. Activates progelatinase A. Involved in the matrix remodeling of blood vessels. It has no effect on type I, II, IV and V collagen. However, upon interaction with CSPG4, it may be involved in degradation and invasion of type I collagen by melanoma cells. The sequence is that of Matrix metalloproteinase-16 (Mmp16) from Mus musculus (Mouse).